The primary structure comprises 238 residues: Synapse differentiation-inducing gene protein 1-like (238 aa).

Disordered stretches follow at residues 1–24, 78–111, and 126–155; these read MESL…GPYP, KVKE…PGQA, and EEFQ…NFLT. Residues 1-162 are Extracellular-facing; the sequence is MESLSELQNP…FLTLPPRDHL (162 aa). Residues 133-151 show a composition bias toward acidic residues; it reads GDPEEEESDATSTESESED. A helical membrane pass occupies residues 163 to 183; sequence GLTIFSMLCCFWPLGIAAFYF. The Cytoplasmic portion of the chain corresponds to 184–205; the sequence is SQGTSKAISKGDFRLANTTSRR. Residues 206–226 traverse the membrane as a helical segment; sequence ALFLATLSIAVGAGLYVAVVV. The Extracellular segment spans residues 227 to 238; it reads ALAAYMSQNGHS.

This sequence belongs to the CD225/Dispanin family.

It localises to the membrane. The protein localises to the golgi apparatus. Its subcellular location is the cis-Golgi network. This is Synapse differentiation-inducing gene protein 1-like (SYNDIG1L) from Bos taurus (Bovine).